A 305-amino-acid polypeptide reads, in one-letter code: Exosome complex component RRP45 (305 aa).

The protein belongs to the RNase PH family. As to quaternary structure, component of the RNA exosome complex. Specifically part of the catalytically inactive RNA exosome core complex (Exo-9) which may associate with the catalytic subunits RRP6 and DIS3 in cytoplasmic- and nuclear-specific RNA exosome complex forms. Exo-9 is formed by a hexameric base ring of RNase PH domain-containing subunits and a cap ring consisting of CSL4, RRP4 and RRP40. Interacts with LRP1.

It localises to the cytoplasm. The protein resides in the nucleus. The protein localises to the nucleolus. Non-catalytic component of the RNA exosome complex which has 3'-&gt;5' exoribonuclease activity and participates in a multitude of cellular RNA processing and degradation events. In the nucleus, the RNA exosome complex is involved in proper maturation of stable RNA species such as rRNA, snRNA and snoRNA, in the elimination of RNA processing by-products and non-coding 'pervasive' transcripts, such as antisense RNA species and cryptic unstable transcripts (CUTs), and of mRNAs with processing defects, thereby limiting or excluding their export to the cytoplasm. In the cytoplasm, the RNA exosome complex is involved in general mRNA turnover and in RNA surveillance pathways, preventing translation of aberrant mRNAs. The catalytic inactive RNA exosome core complex of 9 subunits (Exo-9) is proposed to play a pivotal role in the binding and presentation of RNA for ribonucleolysis, and to serve as a scaffold for the association with catalytic subunits and accessory proteins or complexes. RRP45 is part of the hexameric ring of RNase PH domain-containing subunits proposed to form a central channel which threads RNA substrates for degradation. The sequence is that of Exosome complex component RRP45 (RRP45) from Saccharomyces cerevisiae (strain ATCC 204508 / S288c) (Baker's yeast).